A 694-amino-acid polypeptide reads, in one-letter code: Threonine--tRNA ligase (694 aa).

One can recognise a TGS domain in the interval asparagine 8–proline 74. Residues aspartate 273 to proline 579 are catalytic. Cysteine 378, histidine 429, and histidine 556 together coordinate Zn(2+).

The protein belongs to the class-II aminoacyl-tRNA synthetase family. In terms of assembly, homodimer. Requires Zn(2+) as cofactor.

The protein resides in the cytoplasm. It catalyses the reaction tRNA(Thr) + L-threonine + ATP = L-threonyl-tRNA(Thr) + AMP + diphosphate + H(+). Catalyzes the attachment of threonine to tRNA(Thr) in a two-step reaction: L-threonine is first activated by ATP to form Thr-AMP and then transferred to the acceptor end of tRNA(Thr). Also edits incorrectly charged L-seryl-tRNA(Thr). This Corynebacterium efficiens (strain DSM 44549 / YS-314 / AJ 12310 / JCM 11189 / NBRC 100395) protein is Threonine--tRNA ligase.